A 47-amino-acid chain; its full sequence is Turripeptide Ici9.1 (47 aa).

3 cysteine pairs are disulfide-bonded: cysteine 1-cysteine 31, cysteine 5-cysteine 24, and cysteine 13-cysteine 45. One can recognise a Kazal-like domain in the interval 1–47 (CLSVCSMEYWPVCGSDGKTYPNECHLTSEACMSNTDITVAHVGKCDQ).

It belongs to the conopeptide P-like superfamily. In terms of tissue distribution, expressed by the venom duct.

It localises to the secreted. In terms of biological role, acts as a neurotoxin by inhibiting an ion channel. May also act as a serine protease inhibitor, since it possess the kazal serine protease inhibitor signature. The chain is Turripeptide Ici9.1 from Iotyrris cingulifera (Sea snail).